The chain runs to 56 residues: Large ribosomal subunit protein bL32 (56 aa).

A disordered region spans residues 1-37 (MAVQQNKKSRSKRGMRRSHDALSTAQLSVDATSGELH). Over residues 7 to 16 (KKSRSKRGMR) the composition is skewed to basic residues. The segment covering 21-31 (ALSTAQLSVDA) has biased composition (polar residues).

It belongs to the bacterial ribosomal protein bL32 family.

In Shewanella loihica (strain ATCC BAA-1088 / PV-4), this protein is Large ribosomal subunit protein bL32.